The chain runs to 293 residues: Formamidopyrimidine-DNA glycosylase (293 aa).

P2 (schiff-base intermediate with DNA) is an active-site residue. The active-site Proton donor is E3. The active-site Proton donor; for beta-elimination activity is the K58. Residues H104, R127, and R170 each coordinate DNA. Residues 257 to 293 (SVYGREGKPCRNPACGGTVERVVQSGRSTFFCASCQT) form an FPG-type zinc finger. The active-site Proton donor; for delta-elimination activity is the R283.

Belongs to the FPG family. In terms of assembly, monomer. It depends on Zn(2+) as a cofactor.

It catalyses the reaction Hydrolysis of DNA containing ring-opened 7-methylguanine residues, releasing 2,6-diamino-4-hydroxy-5-(N-methyl)formamidopyrimidine.. The catalysed reaction is 2'-deoxyribonucleotide-(2'-deoxyribose 5'-phosphate)-2'-deoxyribonucleotide-DNA = a 3'-end 2'-deoxyribonucleotide-(2,3-dehydro-2,3-deoxyribose 5'-phosphate)-DNA + a 5'-end 5'-phospho-2'-deoxyribonucleoside-DNA + H(+). In terms of biological role, involved in base excision repair of DNA damaged by oxidation or by mutagenic agents. Acts as a DNA glycosylase that recognizes and removes damaged bases. Has a preference for oxidized purines, such as 7,8-dihydro-8-oxoguanine (8-oxoG). Has AP (apurinic/apyrimidinic) lyase activity and introduces nicks in the DNA strand. Cleaves the DNA backbone by beta-delta elimination to generate a single-strand break at the site of the removed base with both 3'- and 5'-phosphates. This is Formamidopyrimidine-DNA glycosylase from Brucella ovis (strain ATCC 25840 / 63/290 / NCTC 10512).